Here is a 157-residue protein sequence, read N- to C-terminus: Transcriptional repressor NrdR (157 aa).

The segment at 1-24 is disordered; sequence MRCPKCGGNKSSVVDSRQAEDGNT. A zinc finger spans residues 3 to 34; it reads CPKCGGNKSSVVDSRQAEDGNTIRRRRECEEC. The region spanning 49–139 is the ATP-cone domain; it reads LVVVKKDGTR…VYRSFKDVGE (91 aa).

Belongs to the NrdR family. Zn(2+) serves as cofactor.

Functionally, negatively regulates transcription of bacterial ribonucleotide reductase nrd genes and operons by binding to NrdR-boxes. The sequence is that of Transcriptional repressor NrdR from Streptococcus sanguinis (strain SK36).